Reading from the N-terminus, the 263-residue chain is H-2 class II histocompatibility antigen, A-K beta chain (263 aa).

A signal peptide spans 1–27 (MALQIPSLLLLAAVVVLTVLSSPGTEG). The beta-1 stretch occupies residues 28–120 (GNSERHFVHQ…TETPTSLRRL (93 aa)). Over 28–224 (GNSERHFVHQ…RAQSESARSK (197 aa)) the chain is Extracellular. 2 disulfide bridges follow: Cys-42-Cys-104 and Cys-143-Cys-199. Asn-46 is a glycosylation site (N-linked (GlcNAc...) asparagine). A beta-2 region spans residues 121–214 (EQPSVVISLS…SLKSPITVEW (94 aa)). The 89-residue stretch at 123 to 211 (PSVVISLSRT…EHPSLKSPIT (89 aa)) folds into the Ig-like C1-type domain. The segment at 215–224 (RAQSESARSK) is connecting peptide. Residues 225-245 (MLSGIGGCVLGVIFLGLGLFI) traverse the membrane as a helical segment. Residues 246 to 263 (RHRSQKGPRGPPPAGLLQ) are Cytoplasmic-facing.

The protein belongs to the MHC class II family. Ubiquitinated in immature dendritic cells leading to down-regulation of MHC class II.

It is found in the membrane. This is H-2 class II histocompatibility antigen, A-K beta chain (H2-Ab1) from Mus musculus (Mouse).